The chain runs to 507 residues: Ribonuclease Y (507 aa).

Residues 1-21 (MLWYIVAGAGGLLIGYLIASY) form a helical membrane-spanning segment. One can recognise a KH domain in the interval 197 to 282 (TVSTVSLPSD…EMYEKAKQEV (86 aa)). The 94-residue stretch at 323–416 (VLNHSIEVAL…VAAADALSAA (94 aa)) folds into the HD domain.

Belongs to the RNase Y family.

It is found in the cell membrane. In terms of biological role, endoribonuclease that initiates mRNA decay. This Thermotoga petrophila (strain ATCC BAA-488 / DSM 13995 / JCM 10881 / RKU-1) protein is Ribonuclease Y.